Reading from the N-terminus, the 576-residue chain is Formate--tetrahydrofolate ligase (576 aa).

64 to 71 (TPLGEGKT) serves as a coordination point for ATP.

The protein belongs to the formate--tetrahydrofolate ligase family.

The enzyme catalyses (6S)-5,6,7,8-tetrahydrofolate + formate + ATP = (6R)-10-formyltetrahydrofolate + ADP + phosphate. It functions in the pathway one-carbon metabolism; tetrahydrofolate interconversion. This Aeromonas hydrophila subsp. hydrophila (strain ATCC 7966 / DSM 30187 / BCRC 13018 / CCUG 14551 / JCM 1027 / KCTC 2358 / NCIMB 9240 / NCTC 8049) protein is Formate--tetrahydrofolate ligase.